A 198-amino-acid chain; its full sequence is Secreted RxLR effector protein PITG_22926 (198 aa).

The signal sequence occupies residues 1–20 (MLRSFLLIVATVSLFGQCKP). The RxLR-dEER motif lies at 43–52 (RFLRTNDEER).

It belongs to the RxLR effector family. Interacts with host MAP3Kbeta2 in the nucleoplasm.

It localises to the secreted. It is found in the host nucleus. The protein localises to the host nucleolus. Functionally, secreted effector that promotes P.infestans colonization of plant host. Specifically suppresses Avr4/Cf4- and AvrPto/Pto-triggered cell death. Targets the potato MAP3Kbeta2 kinase, a positive regulator of cell death associated with plant immunity, and perturbs signaling pathways triggered by MAP3Kbeta2. The polypeptide is Secreted RxLR effector protein PITG_22926 (Phytophthora infestans (strain T30-4) (Potato late blight agent)).